We begin with the raw amino-acid sequence, 446 residues long: Phosphoglucosamine mutase (446 aa).

Catalysis depends on S99, which acts as the Phosphoserine intermediate. Mg(2+) is bound by residues S99, D242, D244, and D246. S99 is modified (phosphoserine).

This sequence belongs to the phosphohexose mutase family. It depends on Mg(2+) as a cofactor. Post-translationally, activated by phosphorylation.

It catalyses the reaction alpha-D-glucosamine 1-phosphate = D-glucosamine 6-phosphate. In terms of biological role, catalyzes the conversion of glucosamine-6-phosphate to glucosamine-1-phosphate. This is Phosphoglucosamine mutase from Campylobacter concisus (strain 13826).